Reading from the N-terminus, the 307-residue chain is MKLIIATRKSQLALWQSEHVAQILKNTHQIEVLLEGFKTKGDVLLDSPLAKIGGKGLFTKELEESMLRKEAHLAVHSLKDVPSFFPQGLVLAAVSKREQSNDAMLSQNYKDFLSLPKGAKIGTTSLRRKMQLLLLRPDLEIISLRGNVNSRIEKLKNNDFDAIILAMAGIKRLNLDKQVNFVYEFSKDELIPAASQGALGIESINDEKILELLKCLNDENALIETSIEREFIATLEGGCQVPIGINAELLGDEICVRAVLGLPDGSEILKDKRMIKKNDFKGFGESLAKEFIAKGAKELLKKAESMI.

Cysteine 239 is modified (S-(dipyrrolylmethanemethyl)cysteine).

It belongs to the HMBS family. In terms of assembly, monomer. Requires dipyrromethane as cofactor.

It carries out the reaction 4 porphobilinogen + H2O = hydroxymethylbilane + 4 NH4(+). Its pathway is porphyrin-containing compound metabolism; protoporphyrin-IX biosynthesis; coproporphyrinogen-III from 5-aminolevulinate: step 2/4. Tetrapolymerization of the monopyrrole PBG into the hydroxymethylbilane pre-uroporphyrinogen in several discrete steps. The chain is Porphobilinogen deaminase (hemC) from Campylobacter jejuni subsp. jejuni serotype O:2 (strain ATCC 700819 / NCTC 11168).